The following is a 217-amino-acid chain: Small ribosomal subunit protein uS3 (217 aa).

Residues 29–97 (ADYLHEDLAI…AQLNKLTGKQ (69 aa)) form the KH type-2 domain.

This sequence belongs to the universal ribosomal protein uS3 family. In terms of assembly, part of the 30S ribosomal subunit. Forms a tight complex with proteins S10 and S14.

Functionally, binds the lower part of the 30S subunit head. Binds mRNA in the 70S ribosome, positioning it for translation. This Streptococcus mutans serotype c (strain ATCC 700610 / UA159) protein is Small ribosomal subunit protein uS3.